A 426-amino-acid polypeptide reads, in one-letter code: Enolase (426 aa).

Gln163 serves as a coordination point for (2R)-2-phosphoglycerate. Catalysis depends on Glu205, which acts as the Proton donor. The Mg(2+) site is built by Asp242, Glu286, and Asp313. (2R)-2-phosphoglycerate contacts are provided by Lys338, Arg367, Ser368, and Lys389. The Proton acceptor role is filled by Lys338.

The protein belongs to the enolase family. The cofactor is Mg(2+).

It is found in the cytoplasm. The protein localises to the secreted. Its subcellular location is the cell surface. It carries out the reaction (2R)-2-phosphoglycerate = phosphoenolpyruvate + H2O. The protein operates within carbohydrate degradation; glycolysis; pyruvate from D-glyceraldehyde 3-phosphate: step 4/5. Its function is as follows. Catalyzes the reversible conversion of 2-phosphoglycerate (2-PG) into phosphoenolpyruvate (PEP). It is essential for the degradation of carbohydrates via glycolysis. This Syntrophobacter fumaroxidans (strain DSM 10017 / MPOB) protein is Enolase.